Consider the following 463-residue polypeptide: Fumarate hydratase class II (463 aa).

Substrate-binding positions include 98 to 100 (SGT), 129 to 132 (HPND), 139 to 141 (SSN), and threonine 187. Histidine 188 functions as the Proton donor/acceptor in the catalytic mechanism. Serine 318 is an active-site residue. Substrate contacts are provided by residues serine 319 and 324–326 (KVN).

This sequence belongs to the class-II fumarase/aspartase family. Fumarase subfamily. As to quaternary structure, homotetramer.

The protein resides in the cytoplasm. The catalysed reaction is (S)-malate = fumarate + H2O. The protein operates within carbohydrate metabolism; tricarboxylic acid cycle; (S)-malate from fumarate: step 1/1. Functionally, involved in the TCA cycle. Catalyzes the stereospecific interconversion of fumarate to L-malate. This Rickettsia bellii (strain RML369-C) protein is Fumarate hydratase class II.